Reading from the N-terminus, the 318-residue chain is Acetyl-coenzyme A carboxylase carboxyl transferase subunit alpha (318 aa).

Residues 32-293 (DLSQEIESLE…KKALQKHLGE (262 aa)) form the CoA carboxyltransferase C-terminal domain.

This sequence belongs to the AccA family. Acetyl-CoA carboxylase is a heterohexamer composed of biotin carboxyl carrier protein (AccB), biotin carboxylase (AccC) and two subunits each of ACCase subunit alpha (AccA) and ACCase subunit beta (AccD).

Its subcellular location is the cytoplasm. It catalyses the reaction N(6)-carboxybiotinyl-L-lysyl-[protein] + acetyl-CoA = N(6)-biotinyl-L-lysyl-[protein] + malonyl-CoA. It participates in lipid metabolism; malonyl-CoA biosynthesis; malonyl-CoA from acetyl-CoA: step 1/1. Its function is as follows. Component of the acetyl coenzyme A carboxylase (ACC) complex. First, biotin carboxylase catalyzes the carboxylation of biotin on its carrier protein (BCCP) and then the CO(2) group is transferred by the carboxyltransferase to acetyl-CoA to form malonyl-CoA. This chain is Acetyl-coenzyme A carboxylase carboxyl transferase subunit alpha, found in Syntrophomonas wolfei subsp. wolfei (strain DSM 2245B / Goettingen).